We begin with the raw amino-acid sequence, 521 residues long: Protein YjiT (521 aa).

The sequence is that of Protein YjiT (yjiT) from Escherichia coli (strain K12).